The sequence spans 146 residues: MTQPIHILNGPNLNLLGTREPDVYGTLSLKEIEQACARHARDLGYEILFRQSNHEGELIDWLHDANVNACAVVFNPAAFTHTSVALHDAVRAIEPPVIEVHLSQTAAREAFRHHSYIALAARGSITGLGLQSYLLGINAAITSLGN.

Residue Tyr-24 is the Proton acceptor of the active site. Substrate-binding residues include Asn-75, His-81, and Asp-88. His-101 functions as the Proton donor in the catalytic mechanism. Residues 102 to 103 (LS) and Arg-112 contribute to the substrate site.

This sequence belongs to the type-II 3-dehydroquinase family. As to quaternary structure, homododecamer.

It carries out the reaction 3-dehydroquinate = 3-dehydroshikimate + H2O. It functions in the pathway metabolic intermediate biosynthesis; chorismate biosynthesis; chorismate from D-erythrose 4-phosphate and phosphoenolpyruvate: step 3/7. Functionally, catalyzes a trans-dehydration via an enolate intermediate. The polypeptide is 3-dehydroquinate dehydratase (Maricaulis maris (strain MCS10) (Caulobacter maris)).